The chain runs to 865 residues: DNA mismatch repair protein MutS (865 aa).

605 to 612 (GPNMAGKS) lines the ATP pocket. The tract at residues 814–833 (PEPLEAYKPKGNKQPLSDEE) is disordered.

Belongs to the DNA mismatch repair MutS family.

Its function is as follows. This protein is involved in the repair of mismatches in DNA. It is possible that it carries out the mismatch recognition step. This protein has a weak ATPase activity. This is DNA mismatch repair protein MutS from Halalkalibacterium halodurans (strain ATCC BAA-125 / DSM 18197 / FERM 7344 / JCM 9153 / C-125) (Bacillus halodurans).